The following is a 401-amino-acid chain: Multidrug resistance protein MdtH (401 aa).

The next 11 membrane-spanning stretches (helical) occupy residues 13-33, 34-54, 88-108, 139-159, 164-184, 211-231, 248-268, 275-295, 298-318, 341-361, and 366-386; these read YFLI…FPLI, SIHF…ALGL, IGFI…ACIL, ILML…SWLL, FQLV…FNAW, FIIY…VMLM, YIYI…TYWM, ETRL…IGSV, LYEL…AEPA, LSLA…YDLG, and FYQL…LILY.

This sequence belongs to the major facilitator superfamily. DHA1 family. MdtH (TC 2.A.1.2.21) subfamily.

It is found in the cell inner membrane. In Blochmanniella floridana, this protein is Multidrug resistance protein MdtH.